A 599-amino-acid chain; its full sequence is Beta-(1--&gt;2)glucan export ATP-binding/permease protein NdvA (599 aa).

The ABC transmembrane type-1 domain occupies 21 to 301 (TITMCVASVL…ISAFINQTVT (281 aa)). A run of 5 helical transmembrane segments spans residues 22–42 (ITMCVASVLVALVTLAEPVLF), 55–75 (IFSPLLMWAALGGFNIMAAVF), 156–176 (MRMSLVLIVLGVIYVMIGQLV), 248–268 (MASTFSMVVVLVLGAYFVTKG), and 276–296 (IAFIGFAQLMIGRLDQISAFI). The ABC transporter domain occupies 335 to 569 (IVFDNVTYEF…GGRFSDLLRA (235 aa)). Position 368–375 (368–375 (GPTGAGKT)) interacts with ATP.

Belongs to the ABC transporter superfamily. Beta-(1--&gt;2)glucan exporter (TC 3.A.1.108.1) family. As to quaternary structure, homodimer.

Its subcellular location is the cell inner membrane. It carries out the reaction [(1-&gt;2)-beta-D-glucosyl](n)(in) + ATP + H2O = [(1-&gt;2)-beta-D-glucosyl](n)(out) + ADP + phosphate + H(+). Involved in beta-(1--&gt;2)glucan export. Transmembrane domains (TMD) form a pore in the inner membrane and the ATP-binding domain (NBD) is responsible for energy generation. In Brucella melitensis biotype 1 (strain ATCC 23456 / CCUG 17765 / NCTC 10094 / 16M), this protein is Beta-(1--&gt;2)glucan export ATP-binding/permease protein NdvA.